Reading from the N-terminus, the 870-residue chain is MAGLTAAVPQPGVLLILLLNLLHPAQPGGVPGAVPGGVPGGLPGGVPGGVYYPGAGIGGGLGGGALGPGGKPPKPGAGLLGAFGAGPGGLGGAGPGAGLSYASRPGGVLVPGGGAGAAAAYKAAAKAGAGLGGIGGVPGGVGVGGVPGAVGVGGVPGAVGGIGGIGGLGVSTGAVVPQLGAGVGAGGKPGKVPGVGLPGVYPGGVLPGTGARFPGVGVLPGVPTGTGVKAKVPGGGGGAFSGIPGVGPFGGQQPGVPLGYPIKAPKLPGGYGLPYTNGKLPYGVAGAGGKAGYPTGTGVGSQAAVAAAKAAKYAGAGGGGVLPGVGGGGIPGGAGAIPGIGGITGAGTPAAAAAAKAAAKAAKYGAAGGLVPGGPGVRVPGAGIPGVGIPGVGGIPGVGGIPGVGGIPGVGGPGIGGPGIVGGPGAVSPAAAAKAAAKAAKYGARGGVGIPTYGVGAGGFPGYGVGAGAGLGGASQAAAAAAAAKAAKYGAGGAGTLGGLVPGAVPGALPGAVPGALPGAVPGALPGAVPGVPGTGGVPGAGTPAAAAAAAAAKAAAKAGQYGLGPGVGGVPGGVGVGGLPGGVGPGGVTGIGTGPGTGLVPGDLGGAGTPAAAKSAAKAAAKAQYRAAAGLGAGVPGLGVGAGVPGFGAGAGGFGAGAGVPGFGAGAVPGSLAASKAAKYGAAGGLGGPGGLGGPGGLGGPGGFGGPGGLGGVPGGVAGGAPAAAAAAKAAAKAAQYGLGGAGGLGAGGLGAGGLGAGGLGAGGLGAGGLGAGGVIPGAVGLGGVSPAAAAKAAKYGAAGLGGVLGARPFPGGGVAARPGFGLSPIYPGGGAGGLGVGGKPPKPYGGALGALGYQGGGCFGKSCGRKRK.

The first 27 residues, Met1–Pro27, serve as a signal peptide directing secretion. Pro39 and Pro75 each carry 4-hydroxyproline. Pro87 carries the post-translational modification Hydroxyproline. Pro105 bears the 4-hydroxyproline mark. Allysine occurs at positions 122 and 126. 4 positions are modified to 4-hydroxyproline: Pro207, Pro220, Pro223, and Pro244. An allysine mark is found at Lys290 and Lys309. The residue at position 338 (Pro338) is a 4-hydroxyproline. Lys360 and Lys363 each carry allysine. Pro375 carries the hydroxyproline modification. 4-hydroxyproline is present on residues Pro402 and Pro408. A hydroxyproline mark is found at Pro413 and Pro418. An allysine mark is found at Lys434, Lys438, Lys441, Lys485, and Lys488. Residues Pro518 and Pro539 each carry the 4-hydroxyproline modification. Allysine is present on residues Lys554, Lys558, Lys615, Lys619, and Lys623. 4 positions are modified to 4-hydroxyproline: Pro637, Pro646, Pro662, and Pro670. 2 positions are modified to allysine: Lys677 and Lys680. Pro715 is modified (4-hydroxyproline). Allysine occurs at positions 730, 734, 793, and 796. 4-hydroxyproline is present on Pro842. Cysteines 860 and 865 form a disulfide.

This sequence belongs to the elastin family. In terms of assembly, the polymeric elastin chains are cross-linked together into an extensible 3D network. Forms a ternary complex with BGN and MFAP2. Interacts with MFAP2 via divalent cations (calcium &gt; magnesium &gt; manganese) in a dose-dependent and saturating manner. Interacts with FBLN5 and FBN1. Forms a ternary complex with FBN1 and FBLN2 or FBLN5. Interacts with MFAP4 in a Ca (2+)-dependent manner; this interaction promotes ELN self-assembly. Interacts with EFEMP2 with moderate affinity. In terms of processing, elastin is formed through the cross-linking of its soluble precursor tropoelastin. Cross-linking is initiated through the action of lysyl oxidase on exposed lysines to form allysine. Subsequent spontaneous condensation reactions with other allysine or unmodified lysine residues result in various bi-, tri-, and tetrafunctional cross-links. The most abundant cross-links in mature elastin fibers are lysinonorleucine, allysine aldol, desmosine, and isodesmosine. Hydroxylation on proline residues within the sequence motif, GXPG, is most likely to be 4-hydroxy as this fits the requirement for 4-hydroxylation in vertebrates.

The protein localises to the secreted. It is found in the extracellular space. Its subcellular location is the extracellular matrix. Major structural protein of tissues such as aorta and nuchal ligament, which must expand rapidly and recover completely. Molecular determinant of the late arterial morphogenesis, stabilizing arterial structure by regulating proliferation and organization of vascular smooth muscle. The polypeptide is Elastin (Eln) (Rattus norvegicus (Rat)).